The sequence spans 299 residues: ATP phosphoribosyltransferase (299 aa).

It belongs to the ATP phosphoribosyltransferase family. Long subfamily. Mg(2+) is required as a cofactor.

It localises to the cytoplasm. It carries out the reaction 1-(5-phospho-beta-D-ribosyl)-ATP + diphosphate = 5-phospho-alpha-D-ribose 1-diphosphate + ATP. It functions in the pathway amino-acid biosynthesis; L-histidine biosynthesis; L-histidine from 5-phospho-alpha-D-ribose 1-diphosphate: step 1/9. Feedback inhibited by histidine. Its function is as follows. Catalyzes the condensation of ATP and 5-phosphoribose 1-diphosphate to form N'-(5'-phosphoribosyl)-ATP (PR-ATP). Has a crucial role in the pathway because the rate of histidine biosynthesis seems to be controlled primarily by regulation of HisG enzymatic activity. The protein is ATP phosphoribosyltransferase of Shewanella oneidensis (strain ATCC 700550 / JCM 31522 / CIP 106686 / LMG 19005 / NCIMB 14063 / MR-1).